The chain runs to 172 residues: Translation initiation factor IF-3 (172 aa).

Belongs to the IF-3 family. Monomer.

It localises to the cytoplasm. In terms of biological role, IF-3 binds to the 30S ribosomal subunit and shifts the equilibrium between 70S ribosomes and their 50S and 30S subunits in favor of the free subunits, thus enhancing the availability of 30S subunits on which protein synthesis initiation begins. This chain is Translation initiation factor IF-3, found in Oceanobacillus iheyensis (strain DSM 14371 / CIP 107618 / JCM 11309 / KCTC 3954 / HTE831).